Consider the following 756-residue polypeptide: Cilium assembly protein DZIP1L (756 aa).

The interval 1–20 is disordered; it reads MLGQFSPGEPYTTSLSSTPP. Residues 10–19 are compositionally biased toward low complexity; sequence PYTTSLSSTP. The stretch at 108-158 forms a coiled coil; sequence DFLSSQLAGLEERLQAATSLVQQGEGQRAELEKSLQETKQENRRRKQLIAT. The C2H2-type zinc finger occupies 171 to 194; it reads HKCQFCEKSFVNYSYLQAHVQRRH. Composition is skewed to basic and acidic residues over residues 193-202, 237-262, 319-335, and 344-365; these read RHPEVTDAEK, NLRR…ERWK, DPEK…LRER, and RRKF…KSEN. Disordered regions lie at residues 193–212, 233–262, 310–365, 409–466, 531–626, and 693–756; these read RHPE…EEME, QQAD…ERWK, NNAS…KSEN, KIKK…MRES, VKSL…AYIT, and IKTP…GTSA. Coiled-coil stretches lie at residues 196 to 283 and 321 to 416; these read EVTD…FLQE and EKEM…LSAT. Polar residues predominate over residues 534–558; it reads LQKSSGKPTPNTLKQRGKKTSTPLN. The segment covering 560–578 has biased composition (basic and acidic residues); it reads KSLRFRQDSKASDRREKSQ. Residues 586-598 show a composition bias toward pro residues; sequence TPTPRSKAPPPNQ.

The protein belongs to the DZIP C2H2-type zinc-finger protein family.

The protein resides in the cytoplasm. Its subcellular location is the cytoskeleton. It is found in the cilium basal body. It localises to the microtubule organizing center. The protein localises to the centrosome. The protein resides in the centriole. Involved in primary cilium formation. Probably acts as a transition zone protein required for localization of PKD1/PC1 and PKD2/PC2 to the ciliary membrane. The sequence is that of Cilium assembly protein DZIP1L (dzip1l) from Danio rerio (Zebrafish).